The sequence spans 399 residues: Zinc finger TRAF-type-containing protein 1 (399 aa).

Over residues 1–13 the composition is skewed to gly residues; it reads MSGAEEAGGGGPA. Residues 1–20 form a disordered region; that stretch reads MSGAEEAGGGGPAAGPAGAV. The RING-type; degenerate zinc finger occupies 106–151; that stretch reads CTVCLDLPKASVYQCTNGHLMCAGCFIHLLADARLKEEQATCPNCR. A TRAF-type zinc finger spans residues 152–210; sequence CEISKSLCCRNLAVEKAVSELPSECGFCLRQFPRSLLERHQKEECQDRVTQCKYKRIGC.

The protein belongs to the ZFTRAF1 family. Interacts with LGALS3.

It localises to the cytoplasm. It is found in the perinuclear region. This Rattus norvegicus (Rat) protein is Zinc finger TRAF-type-containing protein 1.